Here is a 405-residue protein sequence, read N- to C-terminus: Probable tRNA sulfurtransferase (405 aa).

In terms of domain architecture, THUMP spans 60–165; that stretch reads DQVMARLSQV…REAIYLSTKT (106 aa). ATP is bound by residues 183-184, 208-209, arginine 265, glycine 287, and glutamine 296; these read ML and HF.

It belongs to the ThiI family.

It is found in the cytoplasm. It carries out the reaction [ThiI sulfur-carrier protein]-S-sulfanyl-L-cysteine + a uridine in tRNA + 2 reduced [2Fe-2S]-[ferredoxin] + ATP + H(+) = [ThiI sulfur-carrier protein]-L-cysteine + a 4-thiouridine in tRNA + 2 oxidized [2Fe-2S]-[ferredoxin] + AMP + diphosphate. It catalyses the reaction [ThiS sulfur-carrier protein]-C-terminal Gly-Gly-AMP + S-sulfanyl-L-cysteinyl-[cysteine desulfurase] + AH2 = [ThiS sulfur-carrier protein]-C-terminal-Gly-aminoethanethioate + L-cysteinyl-[cysteine desulfurase] + A + AMP + 2 H(+). It participates in cofactor biosynthesis; thiamine diphosphate biosynthesis. In terms of biological role, catalyzes the ATP-dependent transfer of a sulfur to tRNA to produce 4-thiouridine in position 8 of tRNAs, which functions as a near-UV photosensor. Also catalyzes the transfer of sulfur to the sulfur carrier protein ThiS, forming ThiS-thiocarboxylate. This is a step in the synthesis of thiazole, in the thiamine biosynthesis pathway. The sulfur is donated as persulfide by IscS. In Lacticaseibacillus casei (strain BL23) (Lactobacillus casei), this protein is Probable tRNA sulfurtransferase.